A 717-amino-acid chain; its full sequence is MTPPPPPPPPPGPDPAVDSATDPCPEPQSLVVLFGATAGALGPDLGSDETDLILLVWQVVEPRSRQVGTLHKSLVRAEAAALSPQCREASGLSADSLARAESLDKVLQQFSQLVSGDVALLGGGPYVLCTDGQQLLRQVLHPEASRKNLVLPDTFFSFYDLRREFHMQHPSTCSARDLTVGTMAQDLGLETDATEDDFGVWEVKTMVAVILHLLEGSNGQLFSKPEVVKQKYETGPCSKADVVDNETVVRARGLPWQSSDQDVARFFKGLNIARGGVALCLNAQGRRNGEALIRFVDSEQRDLALQRHKHHMGVRYIEVYKATGEEFVKIAGGTSLEVARFLSREDQVILRLRGLPFSAGPTDVLGFLGPECPVTGGADGLLFVRHPDGRPTGDAFALFACEELAQAALRRHKGMLGKRYIELFRSTAAEVQQVLNRYAASPLLPTLTAPLLPIPFPLAGGTGRDCVRLRGLPYTATIEDILSFLGEAAADIRPHGVHMVLNQQGRPSGDAFIQMMSVERALAAAQRCHKKMMKERYVEVVPCSTEEMSRVLMGGSLSRSGLSPPPCKLPCLSPPTYATFQATPALIPTETTALYPSSALLPAARVPAAATPLAYYPGPATQLYMNYTAYYPSPPVSPTTVGYLTTPPTALASTPTTMLSQPGALVRMQGVPYTAGMKDLLSVFQAYQLAPDDYTTLMPVGDPPRTVLQAPKEWVCL.

Positions 1 to 14 are enriched in pro residues; that stretch reads MTPPPPPPPPPGPD. Residues 1-23 form a disordered region; the sequence is MTPPPPPPPPPGPDPAVDSATDP. Residue S83 is modified to Phosphoserine. 3 consecutive RRM domains span residues 247–343, 348–428, and 465–545; these read TVVR…RFLS, VILR…RSTA, and DCVR…PCST. Position 563 is a phosphoserine (S563).

It belongs to the ESRP family. Interacts with RBPMS. As to expression, epithelial cell-specific.

The protein localises to the nucleus. In terms of biological role, mRNA splicing factor that regulates the formation of epithelial cell-specific isoforms. Specifically regulates the expression of FGFR2-IIIb, an epithelial cell-specific isoform of FGFR2. Also regulates the splicing of CD44, CTNND1, ENAH, 3 transcripts that undergo changes in splicing during the epithelial-to-mesenchymal transition (EMT). Acts by directly binding specific sequences in mRNAs. Binds the GU-rich sequence motifs in the ISE/ISS-3, a cis-element regulatory region present in the mRNA of FGFR2. The chain is Epithelial splicing regulatory protein 2 (Esrp2) from Mus musculus (Mouse).